A 148-amino-acid polypeptide reads, in one-letter code: 3-dehydroquinate dehydratase (148 aa).

The active-site Proton acceptor is the Tyr24. Residues Asn75, His81, and Asp88 each contribute to the substrate site. His101 acts as the Proton donor in catalysis. Substrate is bound by residues 102 to 103 (LS) and Arg112.

It belongs to the type-II 3-dehydroquinase family. Homododecamer.

It catalyses the reaction 3-dehydroquinate = 3-dehydroshikimate + H2O. The protein operates within metabolic intermediate biosynthesis; chorismate biosynthesis; chorismate from D-erythrose 4-phosphate and phosphoenolpyruvate: step 3/7. In terms of biological role, catalyzes a trans-dehydration via an enolate intermediate. This Rhizobium meliloti (strain 1021) (Ensifer meliloti) protein is 3-dehydroquinate dehydratase.